A 131-amino-acid polypeptide reads, in one-letter code: ATP synthase epsilon chain (131 aa).

Belongs to the ATPase epsilon chain family. F-type ATPases have 2 components, CF(1) - the catalytic core - and CF(0) - the membrane proton channel. CF(1) has five subunits: alpha(3), beta(3), gamma(1), delta(1), epsilon(1). CF(0) has three main subunits: a, b and c.

Its subcellular location is the cell membrane. Its function is as follows. Produces ATP from ADP in the presence of a proton gradient across the membrane. This chain is ATP synthase epsilon chain, found in Bacillus licheniformis (strain ATCC 14580 / DSM 13 / JCM 2505 / CCUG 7422 / NBRC 12200 / NCIMB 9375 / NCTC 10341 / NRRL NRS-1264 / Gibson 46).